Here is a 312-residue protein sequence, read N- to C-terminus: Pantothenate kinase (312 aa).

97-104 (GSVAVGKS) is a binding site for ATP.

The protein belongs to the prokaryotic pantothenate kinase family.

The protein resides in the cytoplasm. It catalyses the reaction (R)-pantothenate + ATP = (R)-4'-phosphopantothenate + ADP + H(+). It functions in the pathway cofactor biosynthesis; coenzyme A biosynthesis; CoA from (R)-pantothenate: step 1/5. This is Pantothenate kinase from Mycobacterium marinum (strain ATCC BAA-535 / M).